The sequence spans 408 residues: MKDVLERFLGYIKVDTQSSEESDTVPTTKTQLEFAKKLGEELKAIGLKDVSVDENGYVMATLESNIDKKVPTIGFIAHMDTSPDLSGTNINPRIVEKYDGQDIVLNKEKNIVLKINEFPEILEYKGQDIVVTDGNTLLGADDKAGIAEIITAMEYLINHPEIKHGTIKVGFTPDEEVGKGADHFDVKKFGADLAYTLDGGGIGELECETFNAAKAKVIIEGRNVHPGSAKNKMTNAVLVANKFINMLPENEVPERTEGYEGFFHLLSVKSEVETAELNYIIRDFDRKKFEERKEQIKEVGKKINEEYNKEIVCVKVEDQYYNMKEKIDEVKYVVDIAHDAMKAIDIEPILVPIRGGTDGSRLSFMGLPTPNLFAGGHNFHGRFEFVPVLSMEKAAELVVKIAELYANR.

Histidine 78 serves as a coordination point for Zn(2+). Aspartate 80 is a catalytic residue. Aspartate 141 contacts Zn(2+). The active-site Proton acceptor is the glutamate 175. The Zn(2+) site is built by glutamate 176, aspartate 198, and histidine 380.

This sequence belongs to the peptidase M20B family. Requires Zn(2+) as cofactor.

The protein localises to the cytoplasm. It carries out the reaction Release of the N-terminal residue from a tripeptide.. Functionally, cleaves the N-terminal amino acid of tripeptides. The sequence is that of Peptidase T from Clostridium botulinum (strain Kyoto / Type A2).